The sequence spans 130 residues: Small ribosomal subunit protein uS11c (130 aa).

It belongs to the universal ribosomal protein uS11 family. As to quaternary structure, part of the 30S ribosomal subunit.

The protein localises to the plastid. The chain is Small ribosomal subunit protein uS11c from Aneura mirabilis (Parasitic liverwort).